The chain runs to 2193 residues: Genome polyprotein (2193 aa).

Positions Met-1 to Ser-23 are disordered. Residue Gly-2 is the site of N-myristoyl glycine; by host attachment. The Cytoplasmic segment spans residues Gly-2–Gln-1503. Residues Gly-566–Leu-588 are amphipathic alpha-helix. Catalysis depends on for protease 2A activity residues His-883 and Asp-901. Residues Cys-918 and Cys-920 each coordinate Zn(2+). Cys-972 acts as the For protease 2A activity in catalysis. Residues Cys-978 and His-980 each coordinate Zn(2+). Positions Ser-1112–Leu-1184 are membrane-binding. The interval Ser-1112–Thr-1250 is oligomerization. An RNA-binding region spans residues Ser-1133 to Ser-1137. The SF3 helicase domain occupies Glu-1216–Ala-1374. Gly-1240–Ser-1247 lines the ATP pocket. Zn(2+) is bound by residues Cys-1381, Cys-1392, and Cys-1397. The C4-type; degenerate zinc finger occupies Cys-1381 to Cys-1397. Residues Glu-1424 to Ile-1431 form an RNA-binding region. The interval Ile-1435 to Gln-1440 is oligomerization. Residues Ser-1504–Tyr-1519 lie within the membrane without spanning it. At Lys-1520–Phe-2193 the chain is on the cytoplasmic side. Tyr-1529 bears the O-(5'-phospho-RNA)-tyrosine mark. In terms of domain architecture, Peptidase C3 spans Gly-1549 to Phe-1727. Active-site for protease 3C activity residues include His-1588, Glu-1619, and Cys-1695. One can recognise a RdRp catalytic domain in the interval Gly-1958–Glu-2074. Mg(2+) is bound by residues Asp-1964 and Asp-2060.

This sequence belongs to the picornaviruses polyprotein family. As to quaternary structure, interacts with capsid protein VP1 and capsid protein VP3 to form heterotrimeric protomers. In terms of assembly, interacts with capsid protein VP0, and capsid protein VP3 to form heterotrimeric protomers. Five protomers subsequently associate to form pentamers which serve as building blocks for the capsid. Interacts with capsid protein VP2, capsid protein VP3 and capsid protein VP4 following cleavage of capsid protein VP0. Interacts with capsid protein VP1 and capsid protein VP3 in the mature capsid. As to quaternary structure, interacts with capsid protein VP0 and capsid protein VP1 to form heterotrimeric protomers. Five protomers subsequently associate to form pentamers which serve as building blocks for the capsid. Interacts with capsid protein VP4 in the mature capsid. Interacts with protein 2C; this interaction may be important for virion morphogenesis. In terms of assembly, interacts with capsid protein VP1 and capsid protein VP3. Homodimer. As to quaternary structure, homohexamer; forms a hexameric ring structure with 6-fold symmetry characteristic of AAA+ ATPases. Interacts (via N-terminus) with host RTN3 (via reticulon domain); this interaction is important for viral replication. Interacts with capsid protein VP3; this interaction may be important for virion morphogenesis. In terms of assembly, interacts with protein 3CD. Homodimer. Interacts with host GBF1. Interacts (via GOLD domain) with host ACBD3 (via GOLD domain); this interaction allows the formation of a viral protein 3A/ACBD3 heterotetramer with a 2:2 stoichiometry, which will stimulate the recruitment of host PI4KB in order to synthesize PI4P at the viral RNA replication sites. As to quaternary structure, interacts with RNA-directed RNA polymerase. In terms of assembly, interacts with host IFIH1/MDA5; this interaction inhibits host IFIH1. Protein 3CD: Interacts with protein 3AB and with RNA-directed RNA polymerase. As to quaternary structure, interacts with Viral protein genome-linked and with protein 3CD. The cofactor is Mg(2+). In terms of processing, specific enzymatic cleavages in vivo by the viral proteases yield processing intermediates and the mature proteins. Post-translationally, myristoylation is required for the formation of pentamers during virus assembly. Further assembly of 12 pentamers and a molecule of genomic RNA generates the provirion. During virion maturation, immature virions are rendered infectious following cleavage of VP0 into VP4 and VP2. This maturation seems to be an autocatalytic event triggered by the presence of RNA in the capsid and it is followed by a conformational change infectious virion. In terms of processing, myristoylation is required during RNA encapsidation and formation of the mature virus particle. Post-translationally, VPg is uridylylated by the polymerase into VPg-pUpU. This acts as a nucleotide-peptide primer for the genomic RNA replication.

It is found in the virion. The protein resides in the host cytoplasm. Its subcellular location is the host cytoplasmic vesicle membrane. It localises to the host nucleus. It carries out the reaction a ribonucleoside 5'-triphosphate + H2O = a ribonucleoside 5'-diphosphate + phosphate + H(+). The catalysed reaction is Selective cleavage of Tyr-|-Gly bond in the picornavirus polyprotein.. It catalyses the reaction RNA(n) + a ribonucleoside 5'-triphosphate = RNA(n+1) + diphosphate. The enzyme catalyses Selective cleavage of Gln-|-Gly bond in the poliovirus polyprotein. In other picornavirus reactions Glu may be substituted for Gln, and Ser or Thr for Gly.. Replication or transcription is subject to high level of random mutations by the nucleotide analog ribavirin. Forms an icosahedral capsid of pseudo T=3 symmetry with capsid proteins VP2 and VP3. The capsid is 300 Angstroms in diameter, composed of 60 copies of each capsid protein and enclosing the viral positive strand RNA genome. Capsid protein VP1 mainly forms the vertices of the capsid. Capsid protein VP1 interacts with host cell receptor to provide virion attachment to target host cells. This attachment induces virion internalization. After binding to its receptor, the capsid undergoes conformational changes. Capsid protein VP1 N-terminus (that contains an amphipathic alpha-helix) and capsid protein VP4 are externalized. Together, they shape a pore in the host membrane through which viral genome is translocated to host cell cytoplasm. In terms of biological role, forms an icosahedral capsid of pseudo T=3 symmetry with capsid proteins VP2 and VP3. The capsid is 300 Angstroms in diameter, composed of 60 copies of each capsid protein and enclosing the viral positive strand RNA genome. Its function is as follows. Lies on the inner surface of the capsid shell. After binding to the host receptor, the capsid undergoes conformational changes. Capsid protein VP4 is released, Capsid protein VP1 N-terminus is externalized, and together, they shape a pore in the host membrane through which the viral genome is translocated into the host cell cytoplasm. Functionally, component of immature procapsids, which is cleaved into capsid proteins VP4 and VP2 after maturation. Allows the capsid to remain inactive before the maturation step. Cysteine protease that cleaves viral polyprotein and specific host proteins. It is responsible for the autocatalytic cleavage between the P1 and P2 regions, which is the first cleavage occurring in the polyprotein. Also cleaves the host translation initiation factor EIF4G1, in order to shut down the capped cellular mRNA translation. Inhibits the host nucleus-cytoplasm protein and RNA trafficking by cleaving host members of the nuclear pores. Counteracts stress granule formation probably by antagonizing its assembly or promoting its dissassembly. Cleaves and inhibits host IFIH1/MDA5, thereby inhibiting the type-I IFN production and the establishment of the antiviral state. Cleaves and inhibits host MAVS, thereby inhibiting the type-I IFN production and the establishment of the antiviral state. In terms of biological role, plays an essential role in the virus replication cycle by acting as a viroporin. Creates a pore in the host endoplasmic reticulum and as a consequence releases Ca2+ in the cytoplasm of infected cell. In turn, high levels of cytoplasmic calcium may trigger membrane trafficking and transport of viral ER-associated proteins to viroplasms, sites of viral genome replication. Its function is as follows. Induces and associates with structural rearrangements of intracellular membranes. Displays RNA-binding, nucleotide binding and NTPase activities. May play a role in virion morphogenesis and viral RNA encapsidation by interacting with the capsid protein VP3. Functionally, localizes the viral replication complex to the surface of membranous vesicles. Together with protein 3CD binds the Cis-Active RNA Element (CRE) which is involved in RNA synthesis initiation. Acts as a cofactor to stimulate the activity of 3D polymerase, maybe through a nucleid acid chaperone activity. Localizes the viral replication complex to the surface of membranous vesicles. It inhibits host cell endoplasmic reticulum-to-Golgi apparatus transport and causes the disassembly of the Golgi complex, possibly through GBF1 interaction. This would result in depletion of MHC, trail receptors and IFN receptors at the host cell surface. Plays an essential role in viral RNA replication by recruiting ACBD3 and PI4KB at the viral replication sites, thereby allowing the formation of the rearranged membranous structures where viral replication takes place. In terms of biological role, acts as a primer for viral RNA replication and remains covalently bound to viral genomic RNA. VPg is uridylylated prior to priming replication into VPg-pUpU. The oriI viral genomic sequence may act as a template for this. The VPg-pUpU is then used as primer on the genomic RNA poly(A) by the RNA-dependent RNA polymerase to replicate the viral genome. During genome replication, the VPg-RNA linkage is removed by the host TDP2, thereby accelerating replication. During the late stage of the replication cycle, host TDP2 is excluded from sites of viral RNA synthesis and encapsidation, allowing for the generation of progeny virions. Its function is as follows. Involved in the viral replication complex and viral polypeptide maturation. It exhibits protease activity with a specificity and catalytic efficiency that is different from protease 3C. Protein 3CD lacks polymerase activity. Protein 3CD binds to the 5'UTR of the viral genome. Functionally, major viral protease that mediates proteolytic processing of the polyprotein. Cleaves host EIF5B, contributing to host translation shutoff. Also cleaves host PABPC1, contributing to host translation shutoff. Binds and inhibits host IFIH1/MDA5, thereby inhibiting the type-I IFN production and the establishment of the antiviral state. Cleaves host MAP3K7/TAK1, resulting in inhibition of TRAF6-triggered NF-kappa-B induction. Cleaves host NLRP1, triggers host N-glycine-mediated degradation of the autoinhibitory NLRP1 N-terminal fragment. Replicates the viral genomic RNA on the surface of intracellular membranes. May form linear arrays of subunits that propagate along a strong head-to-tail interaction called interface-I. Covalently attaches UMP to a tyrosine of VPg, which is used to prime RNA synthesis. The positive stranded RNA genome is first replicated at virus induced membranous vesicles, creating a dsRNA genomic replication form. This dsRNA is then used as template to synthesize positive stranded RNA genomes. ss(+)RNA genomes are either translated, replicated or encapsidated. The polypeptide is Genome polyprotein (Homo sapiens (Human)).